Consider the following 144-residue polypeptide: Nucleoside diphosphate kinase (144 aa).

Positions 11, 59, 87, 93, 104, and 114 each coordinate ATP. H117 functions as the Pros-phosphohistidine intermediate in the catalytic mechanism.

Belongs to the NDK family. Homotetramer. Requires Mg(2+) as cofactor.

It localises to the cytoplasm. It carries out the reaction a 2'-deoxyribonucleoside 5'-diphosphate + ATP = a 2'-deoxyribonucleoside 5'-triphosphate + ADP. It catalyses the reaction a ribonucleoside 5'-diphosphate + ATP = a ribonucleoside 5'-triphosphate + ADP. Functionally, major role in the synthesis of nucleoside triphosphates other than ATP. The ATP gamma phosphate is transferred to the NDP beta phosphate via a ping-pong mechanism, using a phosphorylated active-site intermediate. In Baumannia cicadellinicola subsp. Homalodisca coagulata, this protein is Nucleoside diphosphate kinase.